We begin with the raw amino-acid sequence, 436 residues long: 3-ketoacyl-CoA thiolase (436 aa).

C99 (acyl-thioester intermediate) is an active-site residue. Residues H392 and C422 each act as proton acceptor in the active site.

Belongs to the thiolase-like superfamily. Thiolase family. As to quaternary structure, heterotetramer of two alpha chains (FadJ) and two beta chains (FadI).

The protein localises to the cytoplasm. The enzyme catalyses an acyl-CoA + acetyl-CoA = a 3-oxoacyl-CoA + CoA. It functions in the pathway lipid metabolism; fatty acid beta-oxidation. In terms of biological role, catalyzes the final step of fatty acid oxidation in which acetyl-CoA is released and the CoA ester of a fatty acid two carbons shorter is formed. The polypeptide is 3-ketoacyl-CoA thiolase (Escherichia coli O8 (strain IAI1)).